The chain runs to 139 residues: Acidic phospholipase A2 S1E6-c (139 aa).

The N-terminal stretch at 1 to 16 is a signal peptide; that stretch reads MRTLWILAVLLVGVEG. Cystine bridges form between Cys-42-Cys-132, Cys-44-Cys-60, Cys-59-Cys-111, Cys-65-Cys-139, Cys-66-Cys-104, Cys-73-Cys-97, and Cys-91-Cys-102. 3 residues coordinate Ca(2+): Tyr-43, Gly-45, and Gly-47. His-63 is a catalytic residue. Residue Asp-64 coordinates Ca(2+). Residue Asp-105 is part of the active site.

The protein belongs to the phospholipase A2 family. Group II subfamily. D49 sub-subfamily. In terms of assembly, homodimer. Ca(2+) is required as a cofactor. Expressed by the venom gland.

Its subcellular location is the secreted. The enzyme catalyses a 1,2-diacyl-sn-glycero-3-phosphocholine + H2O = a 1-acyl-sn-glycero-3-phosphocholine + a fatty acid + H(+). Functionally, snake venom phospholipase A2 (PLA2) that inhibits ADP-induced platelet aggregation. PLA2 catalyzes the calcium-dependent hydrolysis of the 2-acyl groups in 3-sn-phosphoglycerides. The sequence is that of Acidic phospholipase A2 S1E6-c from Calloselasma rhodostoma (Malayan pit viper).